A 375-amino-acid polypeptide reads, in one-letter code: Protein RecA (375 aa).

An ATP-binding site is contributed by 88 to 95 (GPESSGKT).

This sequence belongs to the RecA family.

The protein localises to the cytoplasm. Functionally, can catalyze the hydrolysis of ATP in the presence of single-stranded DNA, the ATP-dependent uptake of single-stranded DNA by duplex DNA, and the ATP-dependent hybridization of homologous single-stranded DNAs. It interacts with LexA causing its activation and leading to its autocatalytic cleavage. This chain is Protein RecA, found in Rhodopirellula baltica (strain DSM 10527 / NCIMB 13988 / SH1).